Consider the following 337-residue polypeptide: MQKSLITKWLFISCIMVIAMIVIGGITRLTGSGLSIVEWRPVTGILPPFSFESWQAEFAKYKAFPEYNSINYGMTLSQFKFIYLLEFVHRLLGRITALIYIVPLIYFYFKDVIKNRDILPYIIALLLFCVQGFMGWYMVKSGLLNSPSVSHFRLAFHLIIAVIIYHILFYQLIKNRCDILLIPSQTDLKLPLIFSGIAITVIYVQIFLGAMVAGLDAGLIYNSFPLMGDNFIPMEIKDNFFNLANLHDPVFIQFIHRLGGYSVFLVVVVLVICLLKIEHPKLNKIAYFLMIALLMQISTGIITLLYSVPIIIASIHQLFAIILLSIIIWCYFIIKTS.

The next 5 helical transmembrane spans lie at 6 to 26 (ITKWLFISCIMVIAMIVIGGI), 93 to 113 (GRITALIYIVPLIYFYFKDVI), 118 to 138 (ILPYIIALLLFCVQGFMGWYM), 154 to 174 (LAFHLIIAVIIYHILFYQLIK), and 192 to 212 (LIFSGIAITVIYVQIFLGAMV). H256 is a binding site for heme. The next 3 helical transmembrane spans lie at 258-278 (LGGYSVFLVVVVLVICLLKIE), 285-305 (IAYFLMIALLMQISTGIITLL), and 308-328 (VPIIIASIHQLFAIILLSIII). H316 serves as a coordination point for heme.

The protein belongs to the COX15/CtaA family. Type 2 subfamily. In terms of assembly, interacts with CtaB. Requires heme b as cofactor.

It is found in the cell membrane. It catalyses the reaction Fe(II)-heme o + 2 A + H2O = Fe(II)-heme a + 2 AH2. The protein operates within porphyrin-containing compound metabolism; heme A biosynthesis; heme A from heme O: step 1/1. In terms of biological role, catalyzes the conversion of heme O to heme A by two successive hydroxylations of the methyl group at C8. The first hydroxylation forms heme I, the second hydroxylation results in an unstable dihydroxymethyl group, which spontaneously dehydrates, resulting in the formyl group of heme A. The protein is Heme A synthase of Rickettsia felis (strain ATCC VR-1525 / URRWXCal2) (Rickettsia azadi).